A 703-amino-acid chain; its full sequence is tRNA 5-methylaminomethyl-2-thiouridine biosynthesis bifunctional protein MnmC (703 aa).

The tract at residues 1-281 (MTAKPQKSCQ…KPAALVAKDH (281 aa)) is tRNA (mnm(5)s(2)U34)-methyltransferase. Residues 286-703 (VGGGLASANL…LRKLLKGKAL (418 aa)) form an FAD-dependent cmnm(5)s(2)U34 oxidoreductase region.

It in the N-terminal section; belongs to the methyltransferase superfamily. tRNA (mnm(5)s(2)U34)-methyltransferase family. The protein in the C-terminal section; belongs to the DAO family. The cofactor is FAD.

The protein localises to the cytoplasm. The catalysed reaction is 5-aminomethyl-2-thiouridine(34) in tRNA + S-adenosyl-L-methionine = 5-methylaminomethyl-2-thiouridine(34) in tRNA + S-adenosyl-L-homocysteine + H(+). Catalyzes the last two steps in the biosynthesis of 5-methylaminomethyl-2-thiouridine (mnm(5)s(2)U) at the wobble position (U34) in tRNA. Catalyzes the FAD-dependent demodification of cmnm(5)s(2)U34 to nm(5)s(2)U34, followed by the transfer of a methyl group from S-adenosyl-L-methionine to nm(5)s(2)U34, to form mnm(5)s(2)U34. The chain is tRNA 5-methylaminomethyl-2-thiouridine biosynthesis bifunctional protein MnmC from Shewanella sp. (strain MR-7).